A 71-amino-acid polypeptide reads, in one-letter code: Brevinin-1E (71 aa).

Positions methionine 1–cysteine 22 are cleaved as a signal peptide. The propeptide occupies glutamate 23–glutamate 45. Residues cysteine 65 and cysteine 71 are joined by a disulfide bond.

It belongs to the frog skin active peptide (FSAP) family. Brevinin subfamily. In terms of tissue distribution, expressed by the skin glands.

The protein localises to the secreted. Functionally, shows antibacterial activity against representative Gram-negative and Gram-positive bacterial species, and a very high hemolytic activity. In Pelophylax lessonae (Pool frog), this protein is Brevinin-1E.